A 1923-amino-acid polypeptide reads, in one-letter code: Endoribonuclease Dicer (1923 aa).

Residues 51 to 227 (LLEAALDHNT…ELEEKIQKLE (177 aa)) enclose the Helicase ATP-binding domain. An ATP-binding site is contributed by 64–71 (LNTGSGKT). The DECH box signature appears at 175–178 (DECH). A required for interaction with PRKRA and TARBP2 region spans residues 256–595 (DCGPFTDRSG…LRNKCSKSVD (340 aa)). Residues 410–433 (VSWSDSEDDEEDEEIEEKEKPETN) form a disordered region. A phosphoserine mark is found at S413 and S415. Over residues 414-425 (DSEDDEEDEEIE) the composition is skewed to acidic residues. The Helicase C-terminal domain maps to 433-602 (NFPSPFTNIL…SVDTGEADTE (170 aa)). In terms of domain architecture, Dicer dsRNA-binding fold spans 629 to 721 (AIGHVNRYCA…MPVGKETVKY (93 aa)). The 148-residue stretch at 894–1041 (KFMEDIEKSE…LVPELCAIHP (148 aa)) folds into the PAZ domain. S1015 and S1160 each carry phosphoserine. Composition is skewed to polar residues over residues 1246–1255 (NANTSTSDGS) and 1277–1290 (SEQSPSPGYSSRTL). The tract at residues 1246–1291 (NANTSTSDGSPVTAAVPGTTETGEAPPDRTASEQSPSPGYSSRTLG) is disordered. In terms of domain architecture, RNase III 1 spans 1276–1404 (ASEQSPSPGY…TEKWEKDEMT (129 aa)). Residues E1316, E1396, and E1399 each contribute to the Mg(2+) site. Residues S1461, S1469, and S1471 each carry the phosphoserine modification. The RNase III 2 domain occupies 1667-1825 (FENFEKKINY…LAGAIYMDSG (159 aa)). Mg(2+)-binding residues include E1706, D1811, and E1814. One can recognise a DRBM domain in the interval 1853–1915 (SPVRELLEME…ARRALRSLKA (63 aa)). The residue at position 1869 (S1869) is a Phosphoserine.

Belongs to the helicase family. Dicer subfamily. As to quaternary structure, component of the RISC loading complex (RLC), or micro-RNA (miRNA) loading complex (miRLC), which is composed of DICER1, AGO2 and TARBP2; DICER1 and TARBP2 are required to process precursor miRNAs (pre-miRNAs) to mature miRNAs and then load them onto AGO2. Note that the trimeric RLC/miRLC is also referred to as RISC. Interacts with DHX9, AGO1, PIWIL1 and PRKRA. Interacts with AGO2, TARBP2, EIF6, MOV10 and RPL7A (60S ribosome subunit); they form a large RNA-induced silencing complex (RISC). Interacts with BCDIN3D. Interacts (via Dicer dsRNA-binding fold domain) with ALOX5 (via PLAT domain); this interaction enhances arachidonate 5-lipoxygenase activity and modifies the miRNA precursor processing activity of DICER1. Requires Mg(2+) as cofactor. Mn(2+) serves as cofactor.

It localises to the cytoplasm. It carries out the reaction Endonucleolytic cleavage to 5'-phosphomonoester.. Functionally, double-stranded RNA (dsRNA) endoribonuclease playing a central role in short dsRNA-mediated post-transcriptional gene silencing. Cleaves naturally occurring long dsRNAs and short hairpin pre-microRNAs (miRNA) into fragments of twenty-one to twenty-three nucleotides with 3' overhang of two nucleotides, producing respectively short interfering RNAs (siRNA) and mature microRNAs. SiRNAs and miRNAs serve as guide to direct the RNA-induced silencing complex (RISC) to complementary RNAs to degrade them or prevent their translation. Gene silencing mediated by siRNAs, also called RNA interference, controls the elimination of transcripts from mobile and repetitive DNA elements of the genome but also the degradation of exogenous RNA of viral origin for instance. The miRNA pathway on the other side is a mean to specifically regulate the expression of target genes. The sequence is that of Endoribonuclease Dicer (DICER1) from Bos taurus (Bovine).